The chain runs to 118 residues: MLRLILAVALVAACLAFPAAKDGPSPGFQKAFQNFNPNAAAGFGGNGMMGGAGMNPNMFNGAQGFQGFLPQPHQKRDSYQHGGYQHQQSFDNFQGSGGMNNDNSDDSFALRNFNNDGY.

An N-terminal signal peptide occupies residues 1-16 (MLRLILAVALVAACLA). Positions 63 to 118 (QGFQGFLPQPHQKRDSYQHGGYQHQQSFDNFQGSGGMNNDNSDDSFALRNFNNDGY) are disordered. Residues 85-102 (QHQQSFDNFQGSGGMNND) show a composition bias toward polar residues.

As to expression, expressed by the venom duct.

It is found in the secreted. The protein is Turripeptide NCR-01 of Gemmula speciosa (Splendid gem-turris).